The chain runs to 113 residues: Putative pterin-4-alpha-carbinolamine dehydratase (113 aa).

It belongs to the pterin-4-alpha-carbinolamine dehydratase family.

The enzyme catalyses (4aS,6R)-4a-hydroxy-L-erythro-5,6,7,8-tetrahydrobiopterin = (6R)-L-erythro-6,7-dihydrobiopterin + H2O. This is Putative pterin-4-alpha-carbinolamine dehydratase from Saccharophagus degradans (strain 2-40 / ATCC 43961 / DSM 17024).